The following is a 118-amino-acid chain: Ribonuclease P protein component (118 aa).

Belongs to the RnpA family. In terms of assembly, consists of a catalytic RNA component (M1 or rnpB) and a protein subunit.

It catalyses the reaction Endonucleolytic cleavage of RNA, removing 5'-extranucleotides from tRNA precursor.. Its function is as follows. RNaseP catalyzes the removal of the 5'-leader sequence from pre-tRNA to produce the mature 5'-terminus. It can also cleave other RNA substrates such as 4.5S RNA. The protein component plays an auxiliary but essential role in vivo by binding to the 5'-leader sequence and broadening the substrate specificity of the ribozyme. The chain is Ribonuclease P protein component from Vibrio vulnificus (strain CMCP6).